A 427-amino-acid polypeptide reads, in one-letter code: Peptidase B (427 aa).

Residues Lys195 and Asp200 each contribute to the Mn(2+) site. Lys207 is an active-site residue. The Mn(2+) site is built by Asp218, Asp277, and Glu279. Arg281 is a catalytic residue.

Belongs to the peptidase M17 family. As to quaternary structure, homohexamer. The cofactor is Mn(2+).

Its subcellular location is the cytoplasm. The enzyme catalyses Release of an N-terminal amino acid, Xaa, from a peptide or arylamide. Xaa is preferably Glu or Asp but may be other amino acids, including Leu, Met, His, Cys and Gln.. In terms of biological role, probably plays an important role in intracellular peptide degradation. The sequence is that of Peptidase B from Escherichia fergusonii (strain ATCC 35469 / DSM 13698 / CCUG 18766 / IAM 14443 / JCM 21226 / LMG 7866 / NBRC 102419 / NCTC 12128 / CDC 0568-73).